Consider the following 175-residue polypeptide: Dual-action ribosomal maturation protein DarP (175 aa).

It belongs to the DarP family.

It localises to the cytoplasm. In terms of biological role, member of a network of 50S ribosomal subunit biogenesis factors which assembles along the 30S-50S interface, preventing incorrect 23S rRNA structures from forming. Promotes peptidyl transferase center (PTC) maturation. This chain is Dual-action ribosomal maturation protein DarP, found in Vibrio parahaemolyticus serotype O3:K6 (strain RIMD 2210633).